The sequence spans 400 residues: Queuine tRNA-ribosyltransferase catalytic subunit 1 (400 aa).

Aspartate 103 acts as the Proton acceptor in catalysis. Residues aspartate 103 to phenylalanine 107, aspartate 157, glutamine 200, and glycine 227 each bind queuine. Residues glycine 258 to aspartate 264 form an RNA binding region. Aspartate 277 functions as the Nucleophile in the catalytic mechanism. The RNA binding; important for wobble base 34 recognition stretch occupies residues threonine 282 to arginine 286. The Zn(2+) site is built by cysteine 315, cysteine 317, cysteine 320, and histidine 345.

Belongs to the queuine tRNA-ribosyltransferase family. As to quaternary structure, heterodimer of a catalytic subunit qtrt1 and an accessory subunit qtrt2. The cofactor is Zn(2+).

It localises to the cytoplasm. It is found in the mitochondrion outer membrane. The enzyme catalyses guanosine(34) in tRNA + queuine = queuosine(34) in tRNA + guanine. In terms of biological role, catalytic subunit of the queuine tRNA-ribosyltransferase (TGT) that catalyzes the base-exchange of a guanine (G) residue with queuine (Q) at position 34 (anticodon wobble position) in tRNAs with GU(N) anticodons (tRNA-Asp, -Asn, -His and -Tyr), resulting in the hypermodified nucleoside queuosine (7-(((4,5-cis-dihydroxy-2-cyclopenten-1-yl)amino)methyl)-7-deazaguanosine). Catalysis occurs through a double-displacement mechanism. The nucleophile active site attacks the C1' of nucleotide 34 to detach the guanine base from the RNA, forming a covalent enzyme-RNA intermediate. The proton acceptor active site deprotonates the incoming queuine, allowing a nucleophilic attack on the C1' of the ribose to form the product. This is Queuine tRNA-ribosyltransferase catalytic subunit 1 from Danio rerio (Zebrafish).